We begin with the raw amino-acid sequence, 503 residues long: Probable cytosol aminopeptidase (503 aa).

Positions 274 and 279 each coordinate Mn(2+). Lysine 286 is an active-site residue. 3 residues coordinate Mn(2+): aspartate 297, aspartate 356, and glutamate 358. Arginine 360 is an active-site residue.

Belongs to the peptidase M17 family. The cofactor is Mn(2+).

The protein localises to the cytoplasm. It catalyses the reaction Release of an N-terminal amino acid, Xaa-|-Yaa-, in which Xaa is preferably Leu, but may be other amino acids including Pro although not Arg or Lys, and Yaa may be Pro. Amino acid amides and methyl esters are also readily hydrolyzed, but rates on arylamides are exceedingly low.. It carries out the reaction Release of an N-terminal amino acid, preferentially leucine, but not glutamic or aspartic acids.. Its function is as follows. Presumably involved in the processing and regular turnover of intracellular proteins. Catalyzes the removal of unsubstituted N-terminal amino acids from various peptides. This chain is Probable cytosol aminopeptidase, found in Burkholderia pseudomallei (strain 1106a).